We begin with the raw amino-acid sequence, 472 residues long: tRNA-2-methylthio-N(6)-dimethylallyladenosine synthase (472 aa).

The segment at 1–24 is disordered; the sequence is MTGTPDVFPPATPGGTPLVALPAG. One can recognise an MTTase N-terminal domain in the interval 33–150; that stretch reads GKLYIKTHGC…LPELIRARRE (118 aa). The [4Fe-4S] cluster site is built by C42, C79, C113, C187, C191, and C194. The Radical SAM core domain maps to 173 to 407; it reads RADGASAFVS…RINAHAAGIS (235 aa). In terms of domain architecture, TRAM spans 408 to 471; sequence EKMVGTVQTV…TNSLRARVVA (64 aa).

It belongs to the methylthiotransferase family. MiaB subfamily. Monomer. The cofactor is [4Fe-4S] cluster.

It is found in the cytoplasm. It carries out the reaction N(6)-dimethylallyladenosine(37) in tRNA + (sulfur carrier)-SH + AH2 + 2 S-adenosyl-L-methionine = 2-methylsulfanyl-N(6)-dimethylallyladenosine(37) in tRNA + (sulfur carrier)-H + 5'-deoxyadenosine + L-methionine + A + S-adenosyl-L-homocysteine + 2 H(+). Its function is as follows. Catalyzes the methylthiolation of N6-(dimethylallyl)adenosine (i(6)A), leading to the formation of 2-methylthio-N6-(dimethylallyl)adenosine (ms(2)i(6)A) at position 37 in tRNAs that read codons beginning with uridine. This Stenotrophomonas maltophilia (strain R551-3) protein is tRNA-2-methylthio-N(6)-dimethylallyladenosine synthase.